We begin with the raw amino-acid sequence, 283 residues long: Gap junction beta-1 protein (283 aa).

Over Met-1 to Arg-22 the chain is Cytoplasmic. Residues Val-23 to Gly-45 traverse the membrane as a helical segment. Over Asp-46–Arg-75 the chain is Extracellular. A helical membrane pass occupies residues Leu-76–Val-95. The Cytoplasmic segment spans residues Ala-96 to Thr-130. The helical transmembrane segment at Leu-131–Phe-153 threads the bilayer. Over Tyr-154–Thr-191 the chain is Extracellular. Residues Val-192 to Val-214 traverse the membrane as a helical segment. Over Arg-215–Cys-283 the chain is Cytoplasmic. Phosphoserine occurs at positions 233, 258, 266, and 277.

It belongs to the connexin family. Beta-type (group I) subfamily. As to quaternary structure, a connexon is composed of a hexamer of connexins. Interacts with CNST.

The protein localises to the cell membrane. Its subcellular location is the cell junction. The protein resides in the gap junction. Functionally, one gap junction consists of a cluster of closely packed pairs of transmembrane channels, the connexons, through which materials of low MW diffuse from one cell to a neighboring cell. This Equus caballus (Horse) protein is Gap junction beta-1 protein (GJB1).